We begin with the raw amino-acid sequence, 792 residues long: MASELLRLLEFDKIRELLAARCQYSVASERAREIAPTADRDQVAYLLRVTREAARLLNERPSFTIGGFRDIRSVVQAAQRGNILAPADVRTVLDTLEAAASLRRQFMADERWSERYPALAEFVLAMVDLPGLRADLARSIGPRGEVLDTASPELAAIRRSLKEAHERLLERLRRLLAERQEAIQDAYVTIRDGRYVIPVRADRRQAVPGITHDVSGSGQTLFVEPFEVLELNNRWRELQAAETREIERILRVLTQRIADAADELLQIVEAGAALDLALAKARLAYDLDAVEPELLEPSGPTVPEGHPFLRVRLRAARHPLLDRRTAVPIDVELGERFRILVITGPNTGGKTVALKTVGLLALMAQAGLFIPAAPGSGLSVFPAIFVDIGDEQSIEQNLSTFSSHMRRIVATLQQADASSLVLLDEIAAGTDPQEGAALARAILERLLEIGALGIVTTHYPELKVFATGTPGLENASVEFDPVTLSPTYRLLVGLPGRSHALEVARRLGLPEDVIARARELLGSGAPQLDRLIAEMQRRLEEAESLAAAAERSRREAEQLRAAAERLLAEAERERREARQEVLRELEAELARARELARKIERAARSPAYPPIEVTQDSLRALEEVKRRVQSSGRQSRQERVPEIAVGDRVELTALGLEGDVVAIHPESEEVEVRIGQFRVRQPQASVRRIWPRREEVSQTFAPPVSVTTIPRVEPEIHLRGLHVEEALDRLDRYLDRAVRAGLPWVRVVHGKGTGTLRQAIHAFLRDHPLVKSWELAGPHEGGLGVTVVYLEV.

G344–T351 contributes to the ATP binding site. In terms of domain architecture, Smr spans I716 to E791.

Belongs to the DNA mismatch repair MutS family. MutS2 subfamily. As to quaternary structure, homodimer. Binds to stalled ribosomes, contacting rRNA.

Endonuclease that is involved in the suppression of homologous recombination and thus may have a key role in the control of bacterial genetic diversity. Functionally, acts as a ribosome collision sensor, splitting the ribosome into its 2 subunits. Detects stalled/collided 70S ribosomes which it binds and splits by an ATP-hydrolysis driven conformational change. Acts upstream of the ribosome quality control system (RQC), a ribosome-associated complex that mediates the extraction of incompletely synthesized nascent chains from stalled ribosomes and their subsequent degradation. Probably generates substrates for RQC. The protein is Endonuclease MutS2 of Thermomicrobium roseum (strain ATCC 27502 / DSM 5159 / P-2).